We begin with the raw amino-acid sequence, 286 residues long: Aquaporin PIP1-1 (286 aa).

Position 1 is an N-acetylmethionine (Met1). Residues Met1–Pro34 form a disordered region. Over Met1–Gly54 the chain is Cytoplasmic. A helical membrane pass occupies residues Ile55–Val75. The Extracellular portion of the chain corresponds to Lys76–Ala91. Residues Trp92–His112 traverse the membrane as a helical segment. The Cytoplasmic segment spans residues Ile113–Ala132. Residues Asn114–Ala116 carry the NPA 1 motif. The chain crosses the membrane as a helical span at residues Leu133 to Phe153. Topologically, residues Gln154 to Lys174 are extracellular. Residues Gly175–Ala195 form a helical membrane-spanning segment. The Cytoplasmic portion of the chain corresponds to Thr196–Pro208. Residues Ile209–Ile229 form a helical membrane-spanning segment. Over Thr230–Trp256 the chain is Extracellular. The NPA 2 motif lies at Asn235–Ala237. A helical membrane pass occupies residues Val257–Ile277. Topologically, residues Arg278 to Ser286 are cytoplasmic. Ser284 is subject to Phosphoserine.

It belongs to the MIP/aquaporin (TC 1.A.8) family. PIP (TC 1.A.8.11) subfamily. Widely expressed. Expressed in roots, above ground and in flower buds.

Its subcellular location is the cell membrane. Water channel required to facilitate the transport of water across cell membrane. Its function is impaired by Hg(2+). The polypeptide is Aquaporin PIP1-1 (PIP1-1) (Arabidopsis thaliana (Mouse-ear cress)).